Reading from the N-terminus, the 402-residue chain is Heat stress transcription factor A-6a (402 aa).

Positions 1-28 are disordered; the sequence is MLKPQTPRARRAAHPNSHMASSSSSSSL. A coiled-coil region spans residues 212–258; the sequence is EVVSLKRDRAALRAEVIMLKQQYNACKSQLIAMEEMVRNIERRQQQT. The hydrophobic repeat HR-A/B stretch occupies residues 216–266; the sequence is LKRDRAALRAEVIMLKQQYNACKSQLIAMEEMVRNIERRQQQTIGFFAKVL. Positions 290–293 match the Nuclear localization signal motif; that stretch reads KRQR. The AHA signature appears at 349–358; the sequence is DDVWEELDAL.

It belongs to the HSF family. Class A subfamily. In terms of assembly, homotrimer. In terms of processing, exhibits temperature-dependent phosphorylation.

It localises to the nucleus. Its function is as follows. Transcriptional regulator that specifically binds DNA of heat shock promoter elements (HSE). This Oryza sativa subsp. japonica (Rice) protein is Heat stress transcription factor A-6a (HSFA6B).